The primary structure comprises 221 residues: MIRTLAYEGDPHIGIFTRVLEDIAVVPPEASADYCAALKEALGVTLVKTHVQGSSIIGSLVSGNSRGAIVSGLAYPDEIRAIEEYREVMLLEGSMNAAGNVILANDQMAAVHPDMDNATIEQIHSVLGVPVIRLTLSGIKTVGMAGYATNRGILVHARSAGRELATLESTTDLPVGTGTINMGSGLVGTGLLANSTGYLAGIETSGFEMGRIADVFGFVEG.

The protein belongs to the eIF-6 family.

Functionally, binds to the 50S ribosomal subunit and prevents its association with the 30S ribosomal subunit to form the 70S initiation complex. The sequence is that of Translation initiation factor 6 from Methanosphaerula palustris (strain ATCC BAA-1556 / DSM 19958 / E1-9c).